Here is an 858-residue protein sequence, read N- to C-terminus: NEDD4-binding protein 1 (858 aa).

A disordered region spans residues 17–37 (TCTEPPGGRQSPTASRAQPDS). The span at 26–37 (QSPTASRAQPDS) shows a compositional bias: polar residues. The 85-residue stretch at 96–180 (KEDVYKAKEY…VQQFVALFQE (85 aa)) folds into the KH-like domain. Disordered regions lie at residues 262–321 (EDKT…TWTV) and 388–424 (QKTQSTQGAQRTSRTPDPSPCANASSTSTSNRLKEKE). Positions 285–316 (RSSESEQRDTKRQYSLERREEEQCEEREREPT) are enriched in basic and acidic residues. The segment covering 389-418 (KTQSTQGAQRTSRTPDPSPCANASSTSTSN) has biased composition (polar residues). The region spanning 598-750 (LRHIIIDGSN…LGKHGPHLDE (153 aa)) is the RNase NYN domain. Residues 774–784 (SVYSQAAQSTA) are compositionally biased toward polar residues. Residues 774–823 (SVYSQAAQSTAHPSSPSHWPHSGPPDWHLPRPSPSPPPQRSPSETTELKR) form a disordered region. Residues 785–799 (HPSSPSHWPHSGPPD) are compositionally biased toward low complexity. Pro residues predominate over residues 804-813 (RPSPSPPPQR). The coCUN stretch occupies residues 813 to 858 (RSPSETTELKRKLYDIFPDQKQRIDRILSDNPYMRDLNALSGLLLG).

The protein belongs to the N4BP1 family.

Its subcellular location is the nucleus. The protein localises to the nucleolus. The protein resides in the PML body. Its function is as follows. Potent suppressor of cytokine production that acts as a regulator of innate immune signaling and inflammation. Acts as a key negative regulator of select cytokine and chemokine responses elicited by TRIF-independent Toll-like receptors (TLRs), thereby limiting inflammatory cytokine responses to minor insults. Has ribonuclease activity. The chain is NEDD4-binding protein 1 from Danio rerio (Zebrafish).